Reading from the N-terminus, the 173-residue chain is Cell division protein SepF (173 aa).

The segment at 31 to 82 is disordered; the sequence is FEDFDEPLDERPSRNRSPRDDSRNNAVTDSSDHSPSRNERRSPAPAPATADL. Basic and acidic residues-rich tracts occupy residues 39 to 53 and 60 to 72; these read DERP…DDSR and SSDH…ERRS.

This sequence belongs to the SepF family. Homodimer. Interacts with FtsZ.

It is found in the cytoplasm. Cell division protein that is part of the divisome complex and is recruited early to the Z-ring. Probably stimulates Z-ring formation, perhaps through the cross-linking of FtsZ protofilaments. Its function overlaps with FtsA. The sequence is that of Cell division protein SepF from Thermobifida fusca (strain YX).